A 360-amino-acid polypeptide reads, in one-letter code: Phosphoserine aminotransferase (360 aa).

Arginine 41 is a binding site for L-glutamate. Pyridoxal 5'-phosphate-binding positions include 75-76 (AS), tryptophan 101, threonine 151, aspartate 171, and glutamine 194. Lysine 195 carries the post-translational modification N6-(pyridoxal phosphate)lysine. 236–237 (NT) contacts pyridoxal 5'-phosphate.

This sequence belongs to the class-V pyridoxal-phosphate-dependent aminotransferase family. SerC subfamily. Homodimer. The cofactor is pyridoxal 5'-phosphate.

It is found in the cytoplasm. The catalysed reaction is O-phospho-L-serine + 2-oxoglutarate = 3-phosphooxypyruvate + L-glutamate. It catalyses the reaction 4-(phosphooxy)-L-threonine + 2-oxoglutarate = (R)-3-hydroxy-2-oxo-4-phosphooxybutanoate + L-glutamate. The protein operates within amino-acid biosynthesis; L-serine biosynthesis; L-serine from 3-phospho-D-glycerate: step 2/3. Its pathway is cofactor biosynthesis; pyridoxine 5'-phosphate biosynthesis; pyridoxine 5'-phosphate from D-erythrose 4-phosphate: step 3/5. In terms of biological role, catalyzes the reversible conversion of 3-phosphohydroxypyruvate to phosphoserine and of 3-hydroxy-2-oxo-4-phosphonooxybutanoate to phosphohydroxythreonine. This Herpetosiphon aurantiacus (strain ATCC 23779 / DSM 785 / 114-95) protein is Phosphoserine aminotransferase.